Reading from the N-terminus, the 225-residue chain is Germin-like protein 3-8 (225 aa).

The N-terminal stretch at 1–25 (MSRTSSAPLLVLSAALAVLASTCIA) is a signal peptide. C34 and C57 are joined by a disulfide. The Cupin type-1 domain maps to 71-219 (AGLAVASDTD…SFQVDAKIIK (149 aa)). N86 carries N-linked (GlcNAc...) asparagine glycosylation. Mn(2+) contacts are provided by H119, H121, E126, and H165.

This sequence belongs to the germin family. Oligomer (believed to be a pentamer but probably hexamer).

It localises to the secreted. The protein resides in the extracellular space. The protein localises to the apoplast. Functionally, may play a role in plant defense. Probably has no oxalate oxidase activity even if the active site is conserved. This is Germin-like protein 3-8 from Oryza sativa subsp. japonica (Rice).